Consider the following 149-residue polypeptide: Sperm surface protein Sp17 (149 aa).

Basic and acidic residues predominate over residues 83-96 (CEQELAKSSGREET). Residues 83–114 (CEQELAKSSGREETPVTPFEESTEEEREQEEA) form a disordered region. Positions 103 to 113 (ESTEEEREQEE) are enriched in acidic residues. In terms of domain architecture, IQ spans 112 to 141 (EEAAALKIQSLFRGHVAREEVKKMKSDKNE).

Homodimer. May interact with ROPN1. As to expression, testis- and sperm-specific.

Its subcellular location is the membrane. Functionally, sperm surface zona pellucida binding protein. Helps to bind spermatozoa to the zona pellucida with high affinity. Might function in binding zona pellucida and carbohydrates. The polypeptide is Sperm surface protein Sp17 (Spa17) (Mus musculus (Mouse)).